Consider the following 231-residue polypeptide: 5'-methylthioadenosine/S-adenosylhomocysteine nucleosidase (231 aa).

Glu-12 (proton acceptor) is an active-site residue. Residues Gly-78, Met-153, and 174 to 175 each bind substrate; that span reads ME. Catalysis depends on Asp-198, which acts as the Proton donor.

This sequence belongs to the PNP/UDP phosphorylase family. MtnN subfamily.

It catalyses the reaction S-adenosyl-L-homocysteine + H2O = S-(5-deoxy-D-ribos-5-yl)-L-homocysteine + adenine. The catalysed reaction is S-methyl-5'-thioadenosine + H2O = 5-(methylsulfanyl)-D-ribose + adenine. The enzyme catalyses 5'-deoxyadenosine + H2O = 5-deoxy-D-ribose + adenine. Its pathway is amino-acid biosynthesis; L-methionine biosynthesis via salvage pathway; S-methyl-5-thio-alpha-D-ribose 1-phosphate from S-methyl-5'-thioadenosine (hydrolase route): step 1/2. In terms of biological role, catalyzes the irreversible cleavage of the glycosidic bond in both 5'-methylthioadenosine (MTA) and S-adenosylhomocysteine (SAH/AdoHcy) to adenine and the corresponding thioribose, 5'-methylthioribose and S-ribosylhomocysteine, respectively. Also cleaves 5'-deoxyadenosine, a toxic by-product of radical S-adenosylmethionine (SAM) enzymes, into 5-deoxyribose and adenine. This chain is 5'-methylthioadenosine/S-adenosylhomocysteine nucleosidase, found in Psychromonas ingrahamii (strain DSM 17664 / CCUG 51855 / 37).